Here is a 561-residue protein sequence, read N- to C-terminus: Zinc finger protein with KRAB and SCAN domains 1 (561 aa).

The interval 1 to 51 is disordered; the sequence is MMTAESRETTGLSPQAAQEKDGIVIVKVEEEDEEDHMWGQDSSLQETPPPD. S13 is subject to Phosphoserine. K27 is covalently cross-linked (Glycyl lysine isopeptide (Lys-Gly) (interchain with G-Cter in SUMO2)). The SCAN box domain occupies 56 to 138; it reads RQRFRRFCYQ…TLLEDLELDL (83 aa). A disordered region spans residues 163–187; it reads VQESSSFDHHETAQSHFKHSSRKPR. The segment covering 178–187 has biased composition (basic residues); it reads HFKHSSRKPR. Residues K180 and K226 each participate in a glycyl lysine isopeptide (Lys-Gly) (interchain with G-Cter in SUMO2) cross-link. The 80-residue stretch at 225–304 folds into the KRAB domain; the sequence is VKIEDMAVSL…QKEFGEKREQ (80 aa). The segment covering 260 to 275 has biased composition (polar residues); the sequence is NVFSQGSENRNGNEST. The tract at residues 260–372 is disordered; the sequence is NVFSQGSENR…NTPEEAPSGA (113 aa). Basic and acidic residues-rich tracts occupy residues 276 to 286 and 294 to 349; these read SKAEVKEDSTS and FQKE…EKGK. Residues K277, K296, K301, and K336 each participate in a glycyl lysine isopeptide (Lys-Gly) (interchain with G-Cter in SUMO2) cross-link. A compositionally biased stretch (polar residues) spans 355-365; that stretch reads FSLSANFNNTP. A Glycyl lysine isopeptide (Lys-Gly) (interchain with G-Cter in SUMO2) cross-link involves residue K373. 6 consecutive C2H2-type zinc fingers follow at residues 375–397, 403–425, 431–453, 459–481, 487–509, and 515–537; these read HRCDECGKCFTRSSSLIRHKIIH, YECNECGKAFSLNSNLVLHQRIH, HECNECGKAFSHSSNLILHQRIH, YECNECGKAFSQSSDLTKHQRIH, YECSECGKAFNRNSYLILHRRIH, and YKCTKCGKAFTRSSTLTLHHRIH. Residues K410, K438, and K476 each participate in a glycyl lysine isopeptide (Lys-Gly) (interchain with G-Cter in SUMO2) cross-link. K558 is covalently cross-linked (Glycyl lysine isopeptide (Lys-Gly) (interchain with G-Cter in SUMO2)).

It belongs to the krueppel C2H2-type zinc-finger protein family.

It is found in the nucleus. Functionally, may be involved in transcriptional regulation. This is Zinc finger protein with KRAB and SCAN domains 1 (Zkscan1) from Mus musculus (Mouse).